We begin with the raw amino-acid sequence, 180 residues long: Large ribosomal subunit protein uL6 (180 aa).

Belongs to the universal ribosomal protein uL6 family. As to quaternary structure, part of the 50S ribosomal subunit.

In terms of biological role, this protein binds to the 23S rRNA, and is important in its secondary structure. It is located near the subunit interface in the base of the L7/L12 stalk, and near the tRNA binding site of the peptidyltransferase center. The polypeptide is Large ribosomal subunit protein uL6 (Christiangramia forsetii (strain DSM 17595 / CGMCC 1.15422 / KT0803) (Gramella forsetii)).